The chain runs to 1055 residues: Bifunctional fucokinase/GDP-fucose pyrophosphorylase (1055 aa).

The interval 34–565 is GDP-fucose pyrophosphorylase; it reads WDAIVLTAAS…SSQRVSLEEL (532 aa). Positions 693–1055 are L-fucokinase; it reads GKSHSENHIS…VKVYNWSICI (363 aa). 826-836 is an ATP binding site; it reads PRGSGLGTSSI.

This sequence belongs to the GHMP kinase family. It depends on Mn(2+) as a cofactor. Mg(2+) serves as cofactor. As to expression, ubiquitous. Highest expression in flower buds.

The catalysed reaction is L-fucose + ATP = beta-L-fucose 1-phosphate + ADP + H(+). The enzyme catalyses beta-L-fucose 1-phosphate + GTP + H(+) = GDP-beta-L-fucose + diphosphate. Bifunctional enzyme involved in the salvage pathway which converts free L-fucose to GDP-L-fucose. Catalyzes two successive reactions, the ATP-dependent phosphorylation of L-fucose to L-fucose 1-phosphate, and its guanylylation to GDP-L-fucose. The sugar-1-kinase activity has a strict substrate specificity for L-fucose and ATP. The pyrophosphorylase activity has a strict substrate specificity for L-fucose 1-phosphate and GTP. The sequence is that of Bifunctional fucokinase/GDP-fucose pyrophosphorylase (FKGP) from Arabidopsis thaliana (Mouse-ear cress).